A 497-amino-acid chain; its full sequence is B3 domain-containing protein REM1 (497 aa).

3 DNA-binding regions (TF-B3) span residues proline 7–serine 92, phenylalanine 142–histidine 239, and phenylalanine 278–isoleucine 379. A disordered region spans residues alanine 87–alanine 135. A compositionally biased stretch (acidic residues) spans glutamate 91–glutamate 125.

Specifically expressed in the reproductive meristem.

It localises to the nucleus. In terms of biological role, may play a role in flower development. This Brassica oleracea var. botrytis (Cauliflower) protein is B3 domain-containing protein REM1 (REM1).